We begin with the raw amino-acid sequence, 167 residues long: Ribosome maturation factor RimM (167 aa).

The PRC barrel domain maps to 92-165 (EDTYYIADII…RITIDPIEGM (74 aa)).

It belongs to the RimM family. In terms of assembly, binds ribosomal protein uS19.

The protein localises to the cytoplasm. An accessory protein needed during the final step in the assembly of 30S ribosomal subunit, possibly for assembly of the head region. Essential for efficient processing of 16S rRNA. May be needed both before and after RbfA during the maturation of 16S rRNA. It has affinity for free ribosomal 30S subunits but not for 70S ribosomes. In Alkaliphilus oremlandii (strain OhILAs) (Clostridium oremlandii (strain OhILAs)), this protein is Ribosome maturation factor RimM.